Consider the following 65-residue polypeptide: Large ribosomal subunit protein bL35 (65 aa).

This sequence belongs to the bacterial ribosomal protein bL35 family.

The chain is Large ribosomal subunit protein bL35 from Syntrophobacter fumaroxidans (strain DSM 10017 / MPOB).